A 514-amino-acid chain; its full sequence is UDP-N-acetylmuramoyl-L-alanyl-D-glutamate--2,6-diaminopimelate ligase (514 aa).

Threonine 37 lines the UDP-N-acetyl-alpha-D-muramoyl-L-alanyl-D-glutamate pocket. 125–131 is an ATP binding site; sequence GTNGKTS. Residues 167–168, serine 194, glutamine 200, and arginine 202 contribute to the UDP-N-acetyl-alpha-D-muramoyl-L-alanyl-D-glutamate site; that span reads TT. Lysine 234 bears the N6-carboxylysine mark. Meso-2,6-diaminopimelate is bound by residues arginine 406, 430-433, glycine 481, and glutamate 485; that span reads DNPR. The Meso-diaminopimelate recognition motif motif lies at 430–433; it reads DNPR.

This sequence belongs to the MurCDEF family. MurE subfamily. It depends on Mg(2+) as a cofactor. In terms of processing, carboxylation is probably crucial for Mg(2+) binding and, consequently, for the gamma-phosphate positioning of ATP.

Its subcellular location is the cytoplasm. The catalysed reaction is UDP-N-acetyl-alpha-D-muramoyl-L-alanyl-D-glutamate + meso-2,6-diaminopimelate + ATP = UDP-N-acetyl-alpha-D-muramoyl-L-alanyl-gamma-D-glutamyl-meso-2,6-diaminopimelate + ADP + phosphate + H(+). Its pathway is cell wall biogenesis; peptidoglycan biosynthesis. Catalyzes the addition of meso-diaminopimelic acid to the nucleotide precursor UDP-N-acetylmuramoyl-L-alanyl-D-glutamate (UMAG) in the biosynthesis of bacterial cell-wall peptidoglycan. The chain is UDP-N-acetylmuramoyl-L-alanyl-D-glutamate--2,6-diaminopimelate ligase from Ralstonia nicotianae (strain ATCC BAA-1114 / GMI1000) (Ralstonia solanacearum).